Consider the following 276-residue polypeptide: S-adenosylmethionine decarboxylase proenzyme (276 aa).

Ser-126 acts as the Schiff-base intermediate with substrate; via pyruvic acid in catalysis. Ser-126 carries the post-translational modification Pyruvic acid (Ser); by autocatalysis. His-131 acts as the Proton acceptor; for processing activity in catalysis. Catalysis depends on Cys-154, which acts as the Proton donor; for catalytic activity.

It belongs to the prokaryotic AdoMetDC family. Type 2 subfamily. In terms of assembly, heterooctamer of four alpha and four beta chains arranged as a tetramer of alpha/beta heterodimers. It depends on pyruvate as a cofactor. Post-translationally, is synthesized initially as an inactive proenzyme. Formation of the active enzyme involves a self-maturation process in which the active site pyruvoyl group is generated from an internal serine residue via an autocatalytic post-translational modification. Two non-identical subunits are generated from the proenzyme in this reaction, and the pyruvate is formed at the N-terminus of the alpha chain, which is derived from the carboxyl end of the proenzyme. The post-translation cleavage follows an unusual pathway, termed non-hydrolytic serinolysis, in which the side chain hydroxyl group of the serine supplies its oxygen atom to form the C-terminus of the beta chain, while the remainder of the serine residue undergoes an oxidative deamination to produce ammonia and the pyruvoyl group blocking the N-terminus of the alpha chain.

The catalysed reaction is S-adenosyl-L-methionine + H(+) = S-adenosyl 3-(methylsulfanyl)propylamine + CO2. It participates in amine and polyamine biosynthesis; S-adenosylmethioninamine biosynthesis; S-adenosylmethioninamine from S-adenosyl-L-methionine: step 1/1. In terms of biological role, catalyzes the decarboxylation of S-adenosylmethionine to S-adenosylmethioninamine (dcAdoMet), the propylamine donor required for the synthesis of the polyamines spermine and spermidine from the diamine putrescine. The chain is S-adenosylmethionine decarboxylase proenzyme from Alcanivorax borkumensis (strain ATCC 700651 / DSM 11573 / NCIMB 13689 / SK2).